The chain runs to 165 residues: Pro-MCH (165 aa).

An N-terminal signal peptide occupies residues 1-21; that stretch reads MAKMSLSSYMLMLAFSLFSHG. Residues 69-82 show a composition bias toward basic and acidic residues; sequence DESGFMKDDDDKTT. The segment at 69–89 is disordered; the sequence is DESGFMKDDDDKTTKNTGSKQ. An Isoleucine amide modification is found at Ile-143. An intrachain disulfide couples Cys-153 to Cys-162.

It belongs to the melanin-concentrating hormone family. In terms of processing, pro-MCH is processed differentially in the brain and in peripheral organs producing two neuropeptides; NEI and MCH. A third peptide, NGE, may also be produced. Preferential processing in neurons by prohormone convertase 2 (PC2) generates NEI. MCH is generated in neurons of the lateral hypothalmic area by several prohormone convertases including PC1/3, PC2 and PC5/6. MCH is present in all regions of the brain and in neurointermediate lobe of the pituarity gland, with highest concentrations in the hypothalamus. Also expressed to a much lesser extent in stomach, lamina propria of both duodenum and colon, ovary, thymus, pancreas, adrenal gland and testis (spermatogonia, early spermatocytes and Sertoli cells). Weak expression in heart and lung. The other peptides are expressed at least in Sertoli cells, nei being also expressed in brain, stomach and proximal duodenum. In brain exclusively mature mch and nei peptides are present. In peripheral tissues a large product, encompassing the NEI and MCH domains of the precursor, is found predominantly. At low levels fully processed MCH and NEI peptides are present in gut. No expression in peripheral blood.

It localises to the secreted. In terms of biological role, MCH inhibits ACTH secretion at the end of the light on period which corresponds to the peak of the circadian rhythm in ACTH. Inhibits also stress induced ACTH release during the light off period of the cycle. Involved as a neurotransmitter or neuromodulator in a broad array of neuronal functions. Stimulates sexual behavior when injected into the ventromedial nucleus, this effect is antagonized by NEI. In the medial preoptic area, stimulates anxiety and sexual behavior. Antagonizes inhibitory effect of melanotropin alpha on exploration behavior. NEI can influence differentiation of neuronal processes in brain neurons. Affects the content of neurofilament protein in neuritogenesis (in vitro). May also be a neuromodulatory factor. In behavioral tests, it stimulates exploration and anxiety when injected into the ventromedial nucleus. Also stimulates grooming, locomotion and rearing. May antagonize the inhibitory effect of mch on ACTH release. Reduces dopamine and dopac release in the ventromedial nucleus. This chain is Pro-MCH (Pmch), found in Rattus norvegicus (Rat).